The sequence spans 115 residues: Large ribosomal subunit protein bL19 (115 aa).

This sequence belongs to the bacterial ribosomal protein bL19 family.

Functionally, this protein is located at the 30S-50S ribosomal subunit interface and may play a role in the structure and function of the aminoacyl-tRNA binding site. The polypeptide is Large ribosomal subunit protein bL19 (Alkaliphilus oremlandii (strain OhILAs) (Clostridium oremlandii (strain OhILAs))).